A 426-amino-acid polypeptide reads, in one-letter code: MKLQKPKGTQDILPGDAAKWQYVESVARDTFSQYNYGEIRTPMFEHYEVISRSVGDTTDIVTKEMYDFYDKGDRHITLRPEGTAPVVRSYVENKLFAPEVQKPVKLYYIGSMFRYERPQAGRLREFHQIGVECFGAANPATDVETIAMAYHLFEKLGIKDVTLHLNSLGSPESRAAYRQALIDYLTPMRDQLSKDSQRRLDENPLRVLDSKEKEDKLAVEKAPSILDYLDEESQAHFEAVKDMLEALDIPYVIDTNMVRGLDYYSHTIFEFITSVEGSDLTICAGGRYDSLVGYFGGPETPGFGFGLGLERLLMIIEKQGITLPIETEMDIYLAVLGDGANSKALELVQAIRRQGFTAERDYLGRKIKAQFKSADTFKAKLVMTLGESEVEAGKAVIKNNRSRQEVEVSFEDMMTNFANISEQLLS.

It belongs to the class-II aminoacyl-tRNA synthetase family. As to quaternary structure, homodimer.

It is found in the cytoplasm. It catalyses the reaction tRNA(His) + L-histidine + ATP = L-histidyl-tRNA(His) + AMP + diphosphate + H(+). This Streptococcus pyogenes serotype M1 protein is Histidine--tRNA ligase.